The following is a 77-amino-acid chain: Dermatoxin-DA1 (77 aa).

The first 22 residues, Met-1–Cys-22, serve as a signal peptide directing secretion. Positions Glu-23 to Glu-42 are excised as a propeptide. The residue at position 76 (Lys-76) is a Lysine amide.

It belongs to the frog skin active peptide (FSAP) family. Dermatoxin subfamily. As to expression, expressed by the skin glands.

The protein resides in the secreted. Its function is as follows. Possesses a potent antimicrobial activity against Gram-positive and Gram-negative bacteria. Probably acts by disturbing membrane functions with its amphipathic structure. The polypeptide is Dermatoxin-DA1 (Agalychnis dacnicolor (Giant Mexican leaf frog)).